Reading from the N-terminus, the 129-residue chain is Fluoride-specific ion channel FluC 2 (129 aa).

Residues 19-39 (GLGLVVPAAAVGGFPLGTLFI) traverse the membrane as a helical segment. Na(+) is bound by residues Gly-74 and Thr-77. Residues 95–115 (FGMAAVYIAASLFGGLLASWA) form a helical membrane-spanning segment.

This sequence belongs to the fluoride channel Fluc/FEX (TC 1.A.43) family.

It localises to the cell membrane. The catalysed reaction is fluoride(in) = fluoride(out). Na(+) is not transported, but it plays an essential structural role and its presence is essential for fluoride channel function. Its function is as follows. Fluoride-specific ion channel. Important for reducing fluoride concentration in the cell, thus reducing its toxicity. The sequence is that of Fluoride-specific ion channel FluC 2 from Geobacillus kaustophilus (strain HTA426).